A 525-amino-acid chain; its full sequence is Signal recognition particle protein (525 aa).

Residues 107–114 (GLQGSGKT), 196–200 (DTAGR), and 254–257 (TKLD) each bind GTP. Residues 437 to 525 (GMGIPGIGRK…LSKLKFPGKK (89 aa)) are disordered. Residues 447-467 (SATRKSKGAKGKSGKKSKKGT) are compositionally biased toward basic residues. Residues 480 to 497 (GVPGMPGLAGLPGGLPDL) are compositionally biased toward low complexity.

It belongs to the GTP-binding SRP family. SRP54 subfamily. In terms of assembly, part of the signal recognition particle protein translocation system, which is composed of SRP and FtsY.

The protein resides in the cytoplasm. It catalyses the reaction GTP + H2O = GDP + phosphate + H(+). Functionally, involved in targeting and insertion of nascent membrane proteins into the cytoplasmic membrane. Binds to the hydrophobic signal sequence of the ribosome-nascent chain (RNC) as it emerges from the ribosomes. The SRP-RNC complex is then targeted to the cytoplasmic membrane where it interacts with the SRP receptor FtsY. The sequence is that of Signal recognition particle protein from Mycobacterium bovis (strain ATCC BAA-935 / AF2122/97).